The following is a 36-amino-acid chain: Conotoxin Cal6.1h (36 aa).

The propeptide occupies 1–7 (GLGRPSR). Cystine bridges form between cysteine 9–cysteine 25, cysteine 16–cysteine 29, and cysteine 24–cysteine 34.

The protein belongs to the conotoxin O1 superfamily. In terms of tissue distribution, expressed by the venom duct.

It localises to the secreted. Probable neurotoxin with unknown target. Possibly targets ion channels. This Californiconus californicus (California cone) protein is Conotoxin Cal6.1h.